Here is a 620-residue protein sequence, read N- to C-terminus: Translocator protein BipB (620 aa).

Residues 58-95 form a disordered region; that stretch reads QCDAQPAAHDARLDDKPALRAPQERDAPPLGASDTGSR. A compositionally biased stretch (basic and acidic residues) spans 66–84; sequence HDARLDDKPALRAPQERDA. Positions 309–339 form a coiled coil; it reads EMQAKREAELQKKSDEYQAQVKKAEEMQKTM. A run of 3 helical transmembrane segments spans residues 355 to 375, 401 to 421, and 430 to 450; these read FAAA…GLAL, AILK…LVAC, and LAGA…AAFV.

The protein belongs to the SctE/SipB/YopB family.

The protein localises to the secreted. It is found in the host membrane. In terms of biological role, plays a role in the bacterium-induced formation of multinucleated giant cell (MNGC), which is formed after host cell fusion, as well as in the intercellular spreading of bacteria and in the induction of apoptosis in macrophages. May act in concert with other effector proteins to induce fusion of host cell membranes. The chain is Translocator protein BipB (bipB) from Burkholderia pseudomallei (strain 1710b).